Reading from the N-terminus, the 58-residue chain is MAADEKAQANGEQAKGKVKKVVGGAAGNESLKGKGHAEESKGDLRAAKEKAKDAIKRK.

A disordered region spans residues 1–58 (MAADEKAQANGEQAKGKVKKVVGGAAGNESLKGKGHAEESKGDLRAAKEKAKDAIKRK). Basic and acidic residues predominate over residues 31–58 (LKGKGHAEESKGDLRAAKEKAKDAIKRK).

This sequence belongs to the UPF0337 (CsbD) family.

The sequence is that of UPF0337 protein SAV_738 from Streptomyces avermitilis (strain ATCC 31267 / DSM 46492 / JCM 5070 / NBRC 14893 / NCIMB 12804 / NRRL 8165 / MA-4680).